A 387-amino-acid polypeptide reads, in one-letter code: Leucine aminopeptidase 1 (387 aa).

A signal peptide spans 1 to 18; the sequence is MKFTNLSLLALSASLASA. The propeptide occupies 19-86; it reads RFVEQHETDQ…LGTLRTSSVK (68 aa). A glycan (N-linked (GlcNAc...) asparagine) is linked at N179. 4 residues coordinate Zn(2+): H187, D206, E245, and D272. C321 and C325 form a disulfide bridge. Zn(2+) is bound at residue H354.

Belongs to the peptidase M28 family. M28E subfamily. As to quaternary structure, monomer. The cofactor is Zn(2+).

The protein localises to the secreted. Extracellular aminopeptidase that allows assimilation of proteinaceous substrates. This Sclerotinia sclerotiorum (strain ATCC 18683 / 1980 / Ss-1) (White mold) protein is Leucine aminopeptidase 1 (lap1).